The chain runs to 269 residues: MNILIVNRYGDPDVEEFSYELEKLLHHHGHHTSIYKENLLGEAPPLFSGEHPPDLVIVIGGDGTILLTTQRMPVQVPIIGINYGEVGFLADIEPEEMSTFVSHLTEPLPLEARMRIELRINGQHIGTALNEALIVTDRPAKMLKFLIHINGNVAERFRADGLIISTPTGSTAYAMSAGGPIVDPRVEGFLMVPLAPFMLSNRPHLIDSSRTVSITLEATKPAKLVIDGQTEIHLETSSTIELSKSPSPALFIDAGQNFFEKINRKLRHL.

D62 functions as the Proton acceptor in the catalytic mechanism. Residues 62–63, 130–131, K141, R158, D160, 171–176, A195, and Q229 each bind NAD(+); these read DG, NE, and TAYAMS.

Belongs to the NAD kinase family. Requires a divalent metal cation as cofactor.

It localises to the cytoplasm. The enzyme catalyses NAD(+) + ATP = ADP + NADP(+) + H(+). Functionally, involved in the regulation of the intracellular balance of NAD and NADP, and is a key enzyme in the biosynthesis of NADP. Catalyzes specifically the phosphorylation on 2'-hydroxyl of the adenosine moiety of NAD to yield NADP. This chain is NAD kinase, found in Methanospirillum hungatei JF-1 (strain ATCC 27890 / DSM 864 / NBRC 100397 / JF-1).